A 154-amino-acid polypeptide reads, in one-letter code: Large ribosomal subunit protein uL22c (154 aa).

The protein belongs to the universal ribosomal protein uL22 family. As to quaternary structure, part of the 50S ribosomal subunit.

It localises to the plastid. It is found in the chloroplast. In terms of biological role, this protein binds specifically to 23S rRNA. Its function is as follows. The globular domain of the protein is located near the polypeptide exit tunnel on the outside of the subunit, while an extended beta-hairpin is found that lines the wall of the exit tunnel in the center of the 70S ribosome. In Jasminum nudiflorum (Winter jasmine), this protein is Large ribosomal subunit protein uL22c (rpl22).